Here is a 196-residue protein sequence, read N- to C-terminus: uncharacterized protein (196 aa).

This is an uncharacterized protein from Pasteurella multocida (strain Pm70).